We begin with the raw amino-acid sequence, 503 residues long: uncharacterized protein (503 aa).

Disordered regions lie at residues 1–26 and 132–156; these read MADD…SPTT and DQQQ…DNSM. Positions 16–26 are enriched in low complexity; it reads AQSSVPTSPTT. The span at 147 to 156 shows a compositional bias: polar residues; it reads TPNSVDDNSM.

This is an uncharacterized protein from Caenorhabditis elegans.